A 267-amino-acid chain; its full sequence is Indole-3-glycerol phosphate synthase (267 aa).

It belongs to the TrpC family.

It catalyses the reaction 1-(2-carboxyphenylamino)-1-deoxy-D-ribulose 5-phosphate + H(+) = (1S,2R)-1-C-(indol-3-yl)glycerol 3-phosphate + CO2 + H2O. It participates in amino-acid biosynthesis; L-tryptophan biosynthesis; L-tryptophan from chorismate: step 4/5. The polypeptide is Indole-3-glycerol phosphate synthase (Polynucleobacter necessarius subsp. necessarius (strain STIR1)).